Reading from the N-terminus, the 435-residue chain is Trigger factor (435 aa).

One can recognise a PPIase FKBP-type domain in the interval 163 to 248 (DDITLIDFTG…INEIKRKELA (86 aa)).

It belongs to the FKBP-type PPIase family. Tig subfamily.

It is found in the cytoplasm. It carries out the reaction [protein]-peptidylproline (omega=180) = [protein]-peptidylproline (omega=0). Its function is as follows. Involved in protein export. Acts as a chaperone by maintaining the newly synthesized protein in an open conformation. Functions as a peptidyl-prolyl cis-trans isomerase. This chain is Trigger factor, found in Desulforamulus reducens (strain ATCC BAA-1160 / DSM 100696 / MI-1) (Desulfotomaculum reducens).